The chain runs to 293 residues: Protein transport protein yif1 (293 aa).

The Cytoplasmic portion of the chain corresponds to 1 to 139 (MPPKLYHPQP…PPAEDLNSPD (139 aa)). The chain crosses the membrane as a helical span at residues 140–160 (MYIPLMAFTTHILLLCALAGL). Residues 161–175 (QDDFQPELFGLRASK) lie on the Lumenal side of the membrane. A helical membrane pass occupies residues 176–196 (ACAVVLVEFLATRLGCYLLNI). The Cytoplasmic segment spans residues 197-201 (SSQSQ). The helical transmembrane segment at 202 to 222 (VLDLLAFSGYKFVGLILTSLS) threads the bilayer. Over 223 to 226 (KLFE) the chain is Lumenal. A helical transmembrane segment spans residues 227–247 (MPWVTRFVFLYMYLATAFFLL). The Cytoplasmic portion of the chain corresponds to 248-271 (RSLKYAVLPESTMAINATITSHQR). The chain crosses the membrane as a helical span at residues 272–292 (SRRIYFLFFIAASQILFMYVL). A topological domain (lumenal) is located at residue Ser293.

This sequence belongs to the YIF1 family. In terms of assembly, component of the yip1-yif1 complex, composed of at least yif1, yip1 and yos1. The complex interacts with the ER to Golgi SNAREs bos1 and sec22.

The protein localises to the endoplasmic reticulum membrane. It is found in the golgi apparatus membrane. The protein resides in the cytoplasmic vesicle. It localises to the COPII-coated vesicle. In terms of biological role, required for fusion of ER-derived vesicles with the Golgi during ER-to-Golgi protein transport. May be involved in proper membrane localization of Rab GTPases. This chain is Protein transport protein yif1, found in Schizosaccharomyces pombe (strain 972 / ATCC 24843) (Fission yeast).